The sequence spans 192 residues: Peptidyl-tRNA hydrolase (192 aa).

Y17 lines the tRNA pocket. Catalysis depends on H22, which acts as the Proton acceptor. Residues Y68, N70, and N116 each contribute to the tRNA site.

It belongs to the PTH family. As to quaternary structure, monomer.

The protein localises to the cytoplasm. It catalyses the reaction an N-acyl-L-alpha-aminoacyl-tRNA + H2O = an N-acyl-L-amino acid + a tRNA + H(+). Its function is as follows. Hydrolyzes ribosome-free peptidyl-tRNAs (with 1 or more amino acids incorporated), which drop off the ribosome during protein synthesis, or as a result of ribosome stalling. Catalyzes the release of premature peptidyl moieties from peptidyl-tRNA molecules trapped in stalled 50S ribosomal subunits, and thus maintains levels of free tRNAs and 50S ribosomes. The polypeptide is Peptidyl-tRNA hydrolase (Mycobacterium sp. (strain JLS)).